The following is a 142-amino-acid chain: Transcription antitermination protein NusB (142 aa).

It belongs to the NusB family. As to quaternary structure, monomer or homodimer; in equilibrium, with a preference for the monomer. Dimerization may be employed to package NusB in an inactive form until recruitment into antitermination complexes.

In terms of biological role, involved in transcription antitermination. Required for transcription of ribosomal RNA (rRNA) genes. Binds specifically to the boxA antiterminator sequence of the ribosomal RNA (rrn) operons. This chain is Transcription antitermination protein NusB, found in Thermotoga maritima (strain ATCC 43589 / DSM 3109 / JCM 10099 / NBRC 100826 / MSB8).